Consider the following 226-residue polypeptide: Thiamine-phosphate synthase (226 aa).

4-amino-2-methyl-5-(diphosphooxymethyl)pyrimidine is bound by residues 46 to 50 (QLRDK) and Asn-87. The Mg(2+) site is built by Asp-88 and Asp-107. Ser-126 provides a ligand contact to 4-amino-2-methyl-5-(diphosphooxymethyl)pyrimidine. 152–154 (TPT) serves as a coordination point for 2-[(2R,5Z)-2-carboxy-4-methylthiazol-5(2H)-ylidene]ethyl phosphate. 4-amino-2-methyl-5-(diphosphooxymethyl)pyrimidine is bound at residue Lys-155. Gly-183 provides a ligand contact to 2-[(2R,5Z)-2-carboxy-4-methylthiazol-5(2H)-ylidene]ethyl phosphate.

It belongs to the thiamine-phosphate synthase family. It depends on Mg(2+) as a cofactor.

It catalyses the reaction 2-[(2R,5Z)-2-carboxy-4-methylthiazol-5(2H)-ylidene]ethyl phosphate + 4-amino-2-methyl-5-(diphosphooxymethyl)pyrimidine + 2 H(+) = thiamine phosphate + CO2 + diphosphate. The enzyme catalyses 2-(2-carboxy-4-methylthiazol-5-yl)ethyl phosphate + 4-amino-2-methyl-5-(diphosphooxymethyl)pyrimidine + 2 H(+) = thiamine phosphate + CO2 + diphosphate. The catalysed reaction is 4-methyl-5-(2-phosphooxyethyl)-thiazole + 4-amino-2-methyl-5-(diphosphooxymethyl)pyrimidine + H(+) = thiamine phosphate + diphosphate. Its pathway is cofactor biosynthesis; thiamine diphosphate biosynthesis; thiamine phosphate from 4-amino-2-methyl-5-diphosphomethylpyrimidine and 4-methyl-5-(2-phosphoethyl)-thiazole: step 1/1. Functionally, condenses 4-methyl-5-(beta-hydroxyethyl)thiazole monophosphate (THZ-P) and 2-methyl-4-amino-5-hydroxymethyl pyrimidine pyrophosphate (HMP-PP) to form thiamine monophosphate (TMP). The sequence is that of Thiamine-phosphate synthase from Mycobacterium sp. (strain KMS).